The primary structure comprises 334 residues: Nucleoid-associated protein VS_0951 (334 aa).

It belongs to the YejK family.

It localises to the cytoplasm. The protein resides in the nucleoid. This chain is Nucleoid-associated protein VS_0951, found in Vibrio atlanticus (strain LGP32) (Vibrio splendidus (strain Mel32)).